The sequence spans 203 residues: Ras-related protein Rab-7a (203 aa).

GTP-binding positions include 15-22 (GDSGVGKT), 34-40 (SNQYKAT), 63-67 (DTAGQ), 125-128 (NKID), and 157-158 (AK). Positions 37–45 (YKATIGADF) match the Effector region motif. S-geranylgeranyl cysteine attachment occurs at residues Cys-202 and Cys-203.

This sequence belongs to the small GTPase superfamily. Rab family.

Its subcellular location is the late endosome membrane. The protein localises to the lysosome membrane. It is found in the cytoplasmic vesicle. The protein resides in the autophagosome membrane. It localises to the lipid droplet. The enzyme catalyses GTP + H2O = GDP + phosphate + H(+). Its function is as follows. Small GTPase which cycles between active GTP-bound and inactive GDP-bound states. In its active state, binds to a variety of effector proteins playing a key role in the regulation of endo-lysosomal trafficking. Governs early-to-late endosomal maturation, microtubule minus-end as well as plus-end directed endosomal migration and positioning, and endosome-lysosome transport through different protein-protein interaction cascades. Involved in lipophagy, a cytosolic lipase-independent autophagic pathway. This is Ras-related protein Rab-7a (rab7A) from Dictyostelium discoideum (Social amoeba).